We begin with the raw amino-acid sequence, 101 residues long: UPF0213 protein VC_A0739 (101 aa).

Residues 9–85 (SPWFVYLVRC…KALSKSQKEA (77 aa)) form the GIY-YIG domain.

The protein belongs to the UPF0213 family.

The sequence is that of UPF0213 protein VC_A0739 from Vibrio cholerae serotype O1 (strain ATCC 39315 / El Tor Inaba N16961).